A 75-amino-acid polypeptide reads, in one-letter code: Small ribosomal subunit protein bS18 (75 aa).

Belongs to the bacterial ribosomal protein bS18 family. In terms of assembly, part of the 30S ribosomal subunit. Forms a tight heterodimer with protein bS6.

Binds as a heterodimer with protein bS6 to the central domain of the 16S rRNA, where it helps stabilize the platform of the 30S subunit. This chain is Small ribosomal subunit protein bS18, found in Alteromonas mediterranea (strain DSM 17117 / CIP 110805 / LMG 28347 / Deep ecotype).